The sequence spans 464 residues: 17,18-epoxy-17-hydroxycur-19-ene N-malonyltransferase (464 aa).

Residues His-191 and Asp-403 each act as proton acceptor in the active site.

Belongs to the plant acyltransferase family. Monomer. Mainly expressed in roots.

Its subcellular location is the cytoplasm. The enzyme catalyses 17,18-epoxy-17-hydroxycur-19-ene + malonyl-CoA = prestrychnine + CoA. Its pathway is alkaloid biosynthesis. In terms of biological role, malonylransferase involved in the biosynthesis of curare monoterpene indole alkaloids (MIAs), natural products such as strychnine, a neurotoxic compound used as a pesticide to control rodents, and its pharmacologically active derivatives, including brucine, used to regulate blood pressure. Curare alkaloids act as animal glycine receptor antagonists. Catalyzes the conversion of 17,18-epoxy-17-hydroxycur-19-ene (Wieland-Gumlich aldehyde) to prestrychnine, which is spontaneously converted into strychnine and isostrychnine. The sequence is that of 17,18-epoxy-17-hydroxycur-19-ene N-malonyltransferase from Strychnos nux-vomica (Poison nut).